Reading from the N-terminus, the 197-residue chain is Adrenodoxin-like protein 1, mitochondrial (197 aa).

The N-terminal 35 residues, 1–35, are a transit peptide targeting the mitochondrion; that stretch reads MIGHRISRLGSTIVKQLAREGYLATYGTKNLHRSY. The 2Fe-2S ferredoxin-type domain occupies 79 to 184; sequence EKITIIFVDK…GVRLAIPSAT (106 aa). [2Fe-2S] cluster is bound by residues C118, C124, C127, and C165.

Belongs to the adrenodoxin/putidaredoxin family. [2Fe-2S] cluster is required as a cofactor.

It is found in the mitochondrion matrix. Functionally, associates in vitro with the adrenodoxin reductase MFDR to form an efficient low potential electron transfer chain that is able to reduce cytochrome C. Functions as accessory mitochondrial protein involved with BIO2 in the plant biotin synthase reaction. This chain is Adrenodoxin-like protein 1, mitochondrial, found in Arabidopsis thaliana (Mouse-ear cress).